The sequence spans 368 residues: Phospho-N-acetylmuramoyl-pentapeptide-transferase (368 aa).

The next 9 helical transmembrane spans lie at 30–50 (AAAI…IRYL), 72–92 (LPTM…LLWS), 98–118 (HVWL…IDDY), 139–159 (VALG…SVLM), 170–190 (LTID…TALS), 208–228 (AIVV…VYAT), 238–258 (GGEI…FLWF), 264–286 (EIFM…ALLI), and 345–365 (KIVI…LMTL).

It belongs to the glycosyltransferase 4 family. MraY subfamily. Requires Mg(2+) as cofactor.

It is found in the cell inner membrane. The enzyme catalyses UDP-N-acetyl-alpha-D-muramoyl-L-alanyl-gamma-D-glutamyl-meso-2,6-diaminopimeloyl-D-alanyl-D-alanine + di-trans,octa-cis-undecaprenyl phosphate = di-trans,octa-cis-undecaprenyl diphospho-N-acetyl-alpha-D-muramoyl-L-alanyl-D-glutamyl-meso-2,6-diaminopimeloyl-D-alanyl-D-alanine + UMP. Its pathway is cell wall biogenesis; peptidoglycan biosynthesis. Its function is as follows. Catalyzes the initial step of the lipid cycle reactions in the biosynthesis of the cell wall peptidoglycan: transfers peptidoglycan precursor phospho-MurNAc-pentapeptide from UDP-MurNAc-pentapeptide onto the lipid carrier undecaprenyl phosphate, yielding undecaprenyl-pyrophosphoryl-MurNAc-pentapeptide, known as lipid I. The chain is Phospho-N-acetylmuramoyl-pentapeptide-transferase from Chlorobium luteolum (strain DSM 273 / BCRC 81028 / 2530) (Pelodictyon luteolum).